The sequence spans 433 residues: Adenosylhomocysteinase B (433 aa).

The substrate site is built by threonine 57, aspartate 132, glutamate 157, lysine 187, and aspartate 191. The interval 184–351 (SVTKSKFDNL…EGRLVNLGCA (168 aa)) is NAD binding.

This sequence belongs to the adenosylhomocysteinase family. In terms of assembly, homotetramer. The cofactor is NAD(+).

It localises to the cytoplasm. It catalyses the reaction S-adenosyl-L-homocysteine + H2O = L-homocysteine + adenosine. It functions in the pathway amino-acid biosynthesis; L-homocysteine biosynthesis; L-homocysteine from S-adenosyl-L-homocysteine: step 1/1. In terms of biological role, catalyzes the hydrolysis of S-adenosyl-L-homocysteine to form adenosine and homocysteine. Binds copper ions. The sequence is that of Adenosylhomocysteinase B (ahcy-b) from Xenopus laevis (African clawed frog).